Here is a 910-residue protein sequence, read N- to C-terminus: Ubiquitin carboxyl-terminal hydrolase 9 (910 aa).

Residues 19–134 enclose the DUSP domain; sequence TTPEEEKRIV…GGPPIERKLI (116 aa). The segment at 68-89 is disordered; it reads ISGESSEASRPGPIDNHDIIES. The region spanning 303–894 is the USP domain; sequence AGLSNLGNTC…AAYVLFYRRV (592 aa). The active-site Nucleophile is C312. H852 (proton acceptor) is an active-site residue.

This sequence belongs to the peptidase C19 family.

The catalysed reaction is Thiol-dependent hydrolysis of ester, thioester, amide, peptide and isopeptide bonds formed by the C-terminal Gly of ubiquitin (a 76-residue protein attached to proteins as an intracellular targeting signal).. Its function is as follows. Recognizes and hydrolyzes the peptide bond at the C-terminal Gly of ubiquitin. Involved in the processing of poly-ubiquitin precursors as well as that of ubiquitinated proteins. The sequence is that of Ubiquitin carboxyl-terminal hydrolase 9 (UBP9) from Arabidopsis thaliana (Mouse-ear cress).